The chain runs to 435 residues: NADH-quinone oxidoreductase subunit D (435 aa).

Belongs to the complex I 49 kDa subunit family. As to quaternary structure, NDH-1 is composed of 14 different subunits. Subunits NuoB, C, D, E, F, and G constitute the peripheral sector of the complex.

Its subcellular location is the cell inner membrane. It catalyses the reaction a quinone + NADH + 5 H(+)(in) = a quinol + NAD(+) + 4 H(+)(out). Its function is as follows. NDH-1 shuttles electrons from NADH, via FMN and iron-sulfur (Fe-S) centers, to quinones in the respiratory chain. The immediate electron acceptor for the enzyme in this species is believed to be ubiquinone. Couples the redox reaction to proton translocation (for every two electrons transferred, four hydrogen ions are translocated across the cytoplasmic membrane), and thus conserves the redox energy in a proton gradient. In Xanthomonas axonopodis pv. citri (strain 306), this protein is NADH-quinone oxidoreductase subunit D.